A 73-amino-acid polypeptide reads, in one-letter code: MAFLKKSLFLVLFLGLVSLSICDEEKRQDEDDDDDDDEEKRGVFDIIKGAGKQLIARAMGKIAEKVGLNKDGN.

The N-terminal stretch at 1 to 22 (MAFLKKSLFLVLFLGLVSLSIC) is a signal peptide. Positions 23 to 39 (DEEKRQDEDDDDDDDEE) are excised as a propeptide.

In terms of tissue distribution, expressed by the skin glands.

Its subcellular location is the secreted. Functionally, has antibacterial activity against Gram-negative bacteria E.coli ATCC 25922 (MIC=60 uM), K.pneumoniae ATCC 700603 (MIC=240 uM) and S.choleraesuis ATCC 14028 (MIC=240 uM) and against Gram-positive bacterium S.aureus ATCC 29313 (MIC=240 uM). Shows no hemolytic activity and no cytotoxicity. The polypeptide is Ocellatin-PT8 (Leptodactylus pustulatus (Ceara white-lipped frog)).